The chain runs to 213 residues: Eukaryotic translation initiation factor 4E (213 aa).

2 positions are modified to phosphoserine; by CK2: Ser-2 and Ser-15. Residue Thr-22 is modified to Phosphothreonine. Phosphoserine occurs at positions 28 and 30. A Glycyl lysine isopeptide (Lys-Gly) (interchain with G-Cter in ubiquitin) cross-link involves residue Lys-114.

This sequence belongs to the eukaryotic initiation factor 4E family. Component of the eIF4F complex, which composition varies with external and internal environmental conditions. It is composed of at least eIF4A (TIF1/TIF2), eIF4E (TIF45) and eIF4G (TIF4631 or TIF4632). Interacts with PAT1 in a RNA-dependent manner. eIF4E is also known to interact with other partners.

The protein resides in the cytoplasm. Its subcellular location is the nucleus. Recognizes and binds the 7-methylguanosine (m7G)-containing mRNA cap during an early step in the initiation of protein synthesis and facilitates ribosome binding by inducing the unwinding of the mRNAs secondary structures. This Saccharomyces cerevisiae (strain ATCC 204508 / S288c) (Baker's yeast) protein is Eukaryotic translation initiation factor 4E (CDC33).